Reading from the N-terminus, the 97-residue chain is Putative pterin-4-alpha-carbinolamine dehydratase (97 aa).

Belongs to the pterin-4-alpha-carbinolamine dehydratase family.

It catalyses the reaction (4aS,6R)-4a-hydroxy-L-erythro-5,6,7,8-tetrahydrobiopterin = (6R)-L-erythro-6,7-dihydrobiopterin + H2O. The chain is Putative pterin-4-alpha-carbinolamine dehydratase from Saccharolobus solfataricus (strain ATCC 35092 / DSM 1617 / JCM 11322 / P2) (Sulfolobus solfataricus).